Consider the following 172-residue polypeptide: Envelope protein UL45 (172 aa).

Residues Met-1 to Ala-27 are Intravirion-facing. A helical; Signal-anchor for type II membrane protein membrane pass occupies residues Ala-28–Val-48. Residues Pro-49–Pro-172 are Virion surface-facing.

Belongs to the herpesviridae HHV-1 UL45 family.

It is found in the virion membrane. Its function is as follows. Important virulence factor of HSV neurotropism. Seems to be required for glycoprotein B-induced fusion. Dispensable for growth in vitro. The protein is Envelope protein UL45 of Human herpesvirus 1 (strain 17) (HHV-1).